A 340-amino-acid polypeptide reads, in one-letter code: Putative UPF0607 protein ENSP00000332738 (340 aa).

A compositionally biased stretch (basic and acidic residues) spans 75–90 (VRAEEPKEATEVKDQV). Disordered regions lie at residues 75-130 (VRAE…NPRP) and 215-281 (GLLM…KLPC). Residues 91-126 (ETQGQEDNKTGPCSNGKAASTSRPLETQGNLTSSWY) show a composition bias toward polar residues. Residues 228–241 (PAALRSSRSSPPRA) are compositionally biased toward low complexity. The segment covering 242 to 251 (AGHRPRKRKL) has biased composition (basic residues). Positions 254–266 (PPLQLQQTPPLQL) are enriched in low complexity.

The protein belongs to the UPF0607 family.

In Homo sapiens (Human), this protein is Putative UPF0607 protein ENSP00000332738.